We begin with the raw amino-acid sequence, 102 residues long: Large ribosomal subunit protein bL21 (102 aa).

The protein belongs to the bacterial ribosomal protein bL21 family. In terms of assembly, part of the 50S ribosomal subunit. Contacts protein L20.

Its function is as follows. This protein binds to 23S rRNA in the presence of protein L20. This chain is Large ribosomal subunit protein bL21, found in Cutibacterium acnes (strain DSM 16379 / KPA171202) (Propionibacterium acnes).